We begin with the raw amino-acid sequence, 835 residues long: Microcephalin (835 aa).

Residues 1-93 (MAAPILKDVV…AHIDESLFPA (93 aa)) form the BRCT 1 domain. Residues serine 279, serine 287, serine 296, and serine 333 each carry the phosphoserine modification. Disordered stretches follow at residues 332 to 376 (LSPT…RKRS) and 417 to 442 (SPDN…PAQF). Phosphothreonine is present on threonine 335. The segment covering 343–361 (LLIHSRPRSSSVKRKRVSH) has biased composition (basic residues). Phosphoserine is present on serine 548. The disordered stretch occupies residues 555-583 (AVDLKSTQNKGTTSKISNSSEGEAQSEHE). Residues 559 to 577 (KSTQNKGTTSKISNSSEGE) show a composition bias toward polar residues. 2 BRCT domains span residues 640 to 730 (SGRG…PFEL) and 751 to 833 (YRGT…NYLL).

In terms of assembly, interacts with CDC27 and maybe other components of the APC/C complex. Interacts with histone variant H2AX under DNA damage conditions.

The protein resides in the cytoplasm. Its subcellular location is the cytoskeleton. The protein localises to the microtubule organizing center. It localises to the centrosome. Functionally, implicated in chromosome condensation and DNA damage induced cellular responses. May play a role in neurogenesis and regulation of the size of the cerebral cortex. The polypeptide is Microcephalin (Pan troglodytes (Chimpanzee)).